Consider the following 1773-residue polypeptide: Disco-interacting protein 2 (1773 aa).

The region spanning 3–110 is the DMAP1-binding domain; that stretch reads HTASLPGYVR…QRHSKKIDFH (108 aa). 2 positions are modified to phosphotyrosine: Tyr-60 and Tyr-61. Disordered regions lie at residues 112-185 and 198-319; these read QAAM…YHSE and LKGR…PLSS. 2 stretches are compositionally biased toward polar residues: residues 113–125 and 146–165; these read AAMS…QSGN and YQNT…NNSQ. Residues 166-175 are compositionally biased toward basic residues; that stretch reads HRQRRTQRKV. The segment covering 176-185 has biased composition (basic and acidic residues); sequence THNEKRYHSE. Positions 224-236 are enriched in acidic residues; it reads DELDSSTDDESIP. A compositionally biased stretch (basic and acidic residues) spans 241 to 253; that stretch reads SPDKEYNYPRDHI. Polar residues predominate over residues 272 to 297; it reads SMGSQQHARTDVKQNQITNQKYTAPN.

Belongs to the DIP2 family. In terms of assembly, interacts with Disco. Expressed in the developing nervous system. Ubiquitously expressed in the developing brain. Within the mushroom body, a higher level is detected in the core of lobes and peduncle in the late third instar larva. Detected in whole mushroom body neuron structures at 48 hours after puparium formation and during later stages.

It is found in the cell membrane. Functionally, required for precise axonal bifurcation in mushroom body neurons by suppressing ectopic bifurcation and regulating the guidance of sister axons. May function by regulating expression of tdp1. Acts downstream of the serine/threonine-protein kinase Bsk to modulate the direction of axon projection. May play a role in fatty acid metabolism. This Drosophila melanogaster (Fruit fly) protein is Disco-interacting protein 2.